Reading from the N-terminus, the 153-residue chain is Large ribosomal subunit protein uL29 (153 aa).

Residues 1–83 (MNKELRAKTN…KEQTKQKEIQ (83 aa)) are large ribosomal subunit protein uL29. The unknown stretch occupies residues 84–153 (ESVKKIKQLR…NVKAKTKKKG (70 aa)). The segment covering 100–121 (NKEKRLANAEKVKAAPKPEQKT) has biased composition (basic and acidic residues). The interval 100–153 (NKEKRLANAEKVKAAPKPEQKTKKVKKAPKKTETVKPTTNKNKKNVKAKTKKKG) is disordered. The segment covering 140-153 (KNKKNVKAKTKKKG) has biased composition (basic residues).

It belongs to the universal ribosomal protein uL29 family.

The sequence is that of Large ribosomal subunit protein uL29 from Mycoplasmoides gallisepticum (strain R(low / passage 15 / clone 2)) (Mycoplasma gallisepticum).